The chain runs to 129 residues: Aldose 1-epimerase (129 aa).

Belongs to the aldose epimerase family.

The catalysed reaction is alpha-D-glucose = beta-D-glucose. It functions in the pathway carbohydrate metabolism; hexose metabolism. In terms of biological role, mutarotase converts alpha-aldose to the beta-anomer. It is active on D-glucose, L-arabinose, D-xylose, D-galactose, maltose and lactose. This chain is Aldose 1-epimerase (galM), found in Lactobacillus helveticus (Lactobacillus suntoryeus).